A 378-amino-acid chain; its full sequence is Alginate lyase (378 aa).

The first 28 residues, 1–28 (MQTPKLIRPTLLSMAILSSMAWATGASA), serve as a signal peptide directing secretion. Substrate contacts are provided by residues 67-68 (SK), 140-141 (HT), and Tyr258. The disordered stretch occupies residues 359 to 378 (LTKVYDPSHEKGDKGDNDGS). Residues 364–378 (DPSHEKGDKGDNDGS) show a composition bias toward basic and acidic residues.

The protein belongs to the polysaccharide lyase 5 family.

The protein localises to the periplasm. It catalyses the reaction Eliminative cleavage of alginate to give oligosaccharides with 4-deoxy-alpha-L-erythro-hex-4-enuronosyl groups at their non-reducing ends and beta-D-mannuronate at their reducing end.. Catalyzes the depolymerization of alginate by cleaving the beta-1,4 glycosidic bond between two adjacent sugar residues via a beta-elimination mechanism. May serve to degrade mislocalized alginate that is trapped in the periplasmic space. The chain is Alginate lyase from Pseudomonas syringae pv. syringae (strain B728a).